The primary structure comprises 208 residues: Small ribosomal subunit protein uS4 (208 aa).

An S4 RNA-binding domain is found at 98–159 (RRLDNVAYRL…KSRKVAAISE (62 aa)).

The protein belongs to the universal ribosomal protein uS4 family. In terms of assembly, part of the 30S ribosomal subunit. Contacts protein S5. The interaction surface between S4 and S5 is involved in control of translational fidelity.

Functionally, one of the primary rRNA binding proteins, it binds directly to 16S rRNA where it nucleates assembly of the body of the 30S subunit. In terms of biological role, with S5 and S12 plays an important role in translational accuracy. This Citrifermentans bemidjiense (strain ATCC BAA-1014 / DSM 16622 / JCM 12645 / Bem) (Geobacter bemidjiensis) protein is Small ribosomal subunit protein uS4.